The chain runs to 43 residues: Protein PsbN (43 aa).

A helical transmembrane segment spans residues 5 to 27 (TVLSIFISSLLLGITGYSIYTAF).

The protein belongs to the PsbN family.

It is found in the plastid. The protein localises to the chloroplast thylakoid membrane. Functionally, may play a role in photosystem I and II biogenesis. The chain is Protein PsbN from Porphyra purpurea (Red seaweed).